The chain runs to 96 residues: Protein Vpr (96 aa).

Positions 1–42 (MEQAPEDQGPQREPYNEWTLELLEELKNEAVRHFPRIWLHSL) are homooligomerization. Phosphoserine; by host occurs at positions 79, 94, and 96.

Belongs to the HIV-1 VPR protein family. Homooligomer, may form homodimer. Interacts with p6-gag region of the Pr55 Gag precursor protein through a (Leu-X-X)4 motif near the C-terminus of the P6gag protein. Interacts with host UNG. May interact with host RAD23A/HHR23A. Interacts with host VPRBP/DCAF1, leading to hijack the CUL4A-RBX1-DDB1-DCAF1/VPRBP complex, mediating ubiquitination of host proteins such as TERT and ZGPAT and arrest of the cell cycle in G2 phase. In terms of processing, phosphorylated on several residues by host. These phosphorylations regulate VPR activity for the nuclear import of the HIV-1 pre-integration complex.

It is found in the virion. The protein localises to the host nucleus. The protein resides in the host extracellular space. During virus replication, may deplete host UNG protein, and incude G2-M cell cycle arrest. Acts by targeting specific host proteins for degradation by the 26S proteasome, through association with the cellular CUL4A-DDB1 E3 ligase complex by direct interaction with host VPRPB/DCAF-1. Cell cycle arrest reportedly occurs within hours of infection and is not blocked by antiviral agents, suggesting that it is initiated by the VPR carried into the virion. Additionally, VPR induces apoptosis in a cell cycle dependent manner suggesting that these two effects are mechanistically linked. Detected in the serum and cerebrospinal fluid of AIDS patient, VPR may also induce cell death to bystander cells. Its function is as follows. During virus entry, plays a role in the transport of the viral pre-integration (PIC) complex to the host nucleus. This function is crucial for viral infection of non-dividing macrophages. May act directly at the nuclear pore complex, by binding nucleoporins phenylalanine-glycine (FG)-repeat regions. The chain is Protein Vpr from Homo sapiens (Human).